Reading from the N-terminus, the 507-residue chain is MEIKIRRRRGQIAETTVKKEVEEEEQPLSPAARLFHAPEFNCYIISVVGLKNKIEPDMIIEGIKQTLMRHPRFSSKLVNNCNNNRQEQKWVRTNVVVEDHVIIPKIQTQHIENANADVFLESYVSDLTTIPLDTSKPLWEVHLLDLKTSDAENVAVLRIHHSLGDGMSMMSLVLACTRKTSNPNELPSLPYQNRPSSGSSSLKTSSRCYSRFFWLVMVLWSAALLVLNTVCDALEFIATALFLKDTETPIKGDFKLSKGKRMCMVHRTVSLDDIKLIKNAMKMTVNDVVLGVSQAGLSQYLKRRYGEQEESKRNSSNIPKGIRLRAALLVNLRPTTGIQDLADMMTKGSKCRWGNWIGYIIFPFSIALCDDPLKHLRRAKSTIDRKKNSLEAVLTFVVGKILLNTLGVQRAANVLNRALSNTTMSFSNLVGPVEEISFYGHTVTYIAPSVYGHPHALTMHFQSYMNKLTISLTVDPTVISDPHKLCDDWEESLRSIKVVVQERTSTQ.

The Cytoplasmic portion of the chain corresponds to 1–211; it reads MEIKIRRRRG…LKTSSRCYSR (211 aa). His161 (proton acceptor) is an active-site residue. A helical transmembrane segment spans residues 212-232; it reads FFWLVMVLWSAALLVLNTVCD. Residues 233 to 507 lie on the Lumenal side of the membrane; the sequence is ALEFIATALF…VVVQERTSTQ (275 aa). N-linked (GlcNAc...) asparagine glycans are attached at residues Asn314 and Asn421.

It in the N-terminal section; belongs to the long-chain O-acyltransferase family. Mostly expressed in flowers and siliques.

The protein localises to the cell membrane. The protein resides in the endoplasmic reticulum membrane. It catalyses the reaction a long chain fatty alcohol + a fatty acyl-CoA = a wax ester + CoA. The catalysed reaction is an acyl-CoA + a 1,2-diacyl-sn-glycerol = a triacyl-sn-glycerol + CoA. Its pathway is glycerolipid metabolism; triacylglycerol biosynthesis. It functions in the pathway lipid metabolism. In terms of biological role, bifunctional wax ester synthase/diacylglycerol acyltransferase. Involved in cuticular wax biosynthesis. The polypeptide is Wax ester synthase/diacylglycerol acyltransferase 5 (Arabidopsis thaliana (Mouse-ear cress)).